The primary structure comprises 229 residues: Peroxiredoxin-like 2A (229 aa).

Residues Met14–Val112 form a thioredoxin fold region. Catalysis depends on redox-active residues Cys85 and Cys88.

Belongs to the peroxiredoxin-like PRXL2 family. PRXL2A subfamily. Expressed in CSF1 and TNFSF11-stimulated CD14(+) peripheral blood mononuclear cells (PBMCs).

The protein localises to the cytoplasm. It localises to the secreted. Involved in redox regulation of the cell. Acts as an antioxidant. Inhibits TNFSF11-induced NFKB1 and JUN activation and osteoclast differentiation. May affect bone resorption and help to maintain bone mass. Acts as a negative regulator of macrophage-mediated inflammation by inhibiting macrophage production of inflammatory cytokines, probably through suppression of the MAPK signaling pathway. The protein is Peroxiredoxin-like 2A of Homo sapiens (Human).